A 137-amino-acid chain; its full sequence is MRNFDLSPLYRSAIGFDRLFNLLENNQSQSNGGYPPYNVELVDENHYRIAIAVAGFAESELEITAQDNLLVVKGAHADEQKERTYLYQGIAERNFERKFQLAENIHVRGANLVNGLLYIELERVIPEANKPRRIEIN.

Residues 28–137 form the sHSP domain; that stretch reads SQSNGGYPPY…ANKPRRIEIN (110 aa).

This sequence belongs to the small heat shock protein (HSP20) family. As to quaternary structure, monomer. Forms homomultimers of about 100-150 subunits at optimal growth temperatures. Conformation changes to monomers at high temperatures or high ionic concentrations.

The protein resides in the cytoplasm. In terms of biological role, associates with aggregated proteins, together with IbpB, to stabilize and protect them from irreversible denaturation and extensive proteolysis during heat shock and oxidative stress. Aggregated proteins bound to the IbpAB complex are more efficiently refolded and reactivated by the ATP-dependent chaperone systems ClpB and DnaK/DnaJ/GrpE. Its activity is ATP-independent. In Salmonella choleraesuis (strain SC-B67), this protein is Small heat shock protein IbpA.